A 288-amino-acid polypeptide reads, in one-letter code: Acetyl-coenzyme A carboxylase carboxyl transferase subunit beta, chloroplastic (288 aa).

A CoA carboxyltransferase N-terminal domain is found at 30 to 288; the sequence is LWIKCFDCGL…QILSLHNHSK (259 aa). Zn(2+)-binding residues include cysteine 34, cysteine 37, cysteine 53, and cysteine 56. The segment at 34–56 adopts a C4-type zinc-finger fold; the sequence is CFDCGLLMYSKVLKRNLKVCPQC.

This sequence belongs to the AccD/PCCB family. As to quaternary structure, acetyl-CoA carboxylase is a heterohexamer composed of biotin carboxyl carrier protein, biotin carboxylase and 2 subunits each of ACCase subunit alpha and ACCase plastid-coded subunit beta (accD). Requires Zn(2+) as cofactor.

It localises to the plastid. Its subcellular location is the chloroplast stroma. It catalyses the reaction N(6)-carboxybiotinyl-L-lysyl-[protein] + acetyl-CoA = N(6)-biotinyl-L-lysyl-[protein] + malonyl-CoA. It functions in the pathway lipid metabolism; malonyl-CoA biosynthesis; malonyl-CoA from acetyl-CoA: step 1/1. Functionally, component of the acetyl coenzyme A carboxylase (ACC) complex. Biotin carboxylase (BC) catalyzes the carboxylation of biotin on its carrier protein (BCCP) and then the CO(2) group is transferred by the transcarboxylase to acetyl-CoA to form malonyl-CoA. The protein is Acetyl-coenzyme A carboxylase carboxyl transferase subunit beta, chloroplastic of Pyropia yezoensis (Susabi-nori).